A 1830-amino-acid polypeptide reads, in one-letter code: Urea amidolyase (1830 aa).

Residues G115–T122, K740, E823, and N858 contribute to the ATP site. The Biotin carboxylation domain occupies P625–Y1068. In terms of domain architecture, ATP-grasp spans R744–A941. A Biotinyl-binding domain is found at A1752 to Q1830. K1796 bears the N6-biotinyllysine mark.

The protein belongs to the DUR1,2 family. As to quaternary structure, monomer. Requires biotin as cofactor.

It catalyses the reaction urea + hydrogencarbonate + ATP = urea-1-carboxylate + ADP + phosphate + H(+). It carries out the reaction urea-1-carboxylate + H2O + 3 H(+) = 2 NH4(+) + 2 CO2. It functions in the pathway nitrogen metabolism; urea degradation; CO(2) and NH(3) from urea (allophanate route): step 1/2. Its pathway is nitrogen metabolism; urea degradation; CO(2) and NH(3) from urea (allophanate route): step 2/2. Involved in uracil catabolism. Hydrolysis of urea to ammonia and CO(2). The polypeptide is Urea amidolyase (DUR1,2) (Lachancea kluyveri (Yeast)).